The sequence spans 483 residues: GTPase Der (483 aa).

2 EngA-type G domains span residues 3–167 (FTLA…GEER) and 212–387 (LRIA…EIWN). GTP-binding positions include 9-16 (GRPNVGKS), 56-60 (DTAGL), 119-122 (NKAE), 218-225 (GRPNAGKS), 265-269 (DTAGM), and 330-333 (NKWD). The 85-residue stretch at 388 to 472 (RRISTGRLNR…PIRLSLRTSD (85 aa)) folds into the KH-like domain.

It belongs to the TRAFAC class TrmE-Era-EngA-EngB-Septin-like GTPase superfamily. EngA (Der) GTPase family. As to quaternary structure, associates with the 50S ribosomal subunit.

In terms of biological role, GTPase that plays an essential role in the late steps of ribosome biogenesis. This Brucella suis biovar 1 (strain 1330) protein is GTPase Der.